We begin with the raw amino-acid sequence, 439 residues long: Secreted aspartic protease FUS4 (439 aa).

An N-terminal signal peptide occupies residues methionine 1–alanine 22. In terms of domain architecture, Peptidase A1 spans tyrosine 49–alanine 434. Residues asparagine 52 and asparagine 61 are each glycosylated (N-linked (GlcNAc...) asparagine). The active site involves aspartate 67. N-linked (GlcNAc...) asparagine glycans are attached at residues asparagine 101, asparagine 107, and asparagine 123. Aspartate 296 is a catalytic residue. Cysteines 352 and 390 form a disulfide.

It belongs to the peptidase A1 family.

It localises to the secreted. Secreted aspartic protease; part of the gene cluster that mediates the biosynthesis of the mycotoxin fusarin C. Within the cluster, FUS1, FUS2, FUS8 and FUS9 are sufficient for fusarin production. The other FUS cluster members are not essential for fusarin C biosynthesis. This Gibberella moniliformis (strain M3125 / FGSC 7600) (Maize ear and stalk rot fungus) protein is Secreted aspartic protease FUS4.